A 702-amino-acid polypeptide reads, in one-letter code: Flagellar operon control protein UmoB (702 aa).

5 consecutive transmembrane segments (helical) span residues Ser-4 to Phe-24, Gly-204 to Met-224, Val-227 to Ile-247, Ile-343 to Ser-363, and Gly-656 to Ile-676.

This sequence belongs to the IgaA family.

The protein resides in the cell inner membrane. Functionally, up-regulator of flagellar flhDC master operon. The chain is Flagellar operon control protein UmoB (umoB) from Proteus mirabilis.